The chain runs to 238 residues: Probable RNA/DNA demethylase ALKBH6 (238 aa).

Residues 96-227 enclose the Fe2OG dioxygenase domain; that stretch reads PANHVLVNQY…RVSLTIRRVP (132 aa). 2-oxoglutarate contacts are provided by asparagine 103 and tyrosine 105. The Fe cation site is built by histidine 114, aspartate 116, and histidine 182. Arginine 218 and serine 220 together coordinate 2-oxoglutarate.

Belongs to the alkB family. In terms of assembly, interacts with VCPKMT. The cofactor is Fe(2+).

The protein resides in the cytoplasm. It localises to the nucleus. Its function is as follows. Probable Fe(2+)/2-oxoglutarate-dependent dioxygenase involved in oxidative demethylation of nucleic acids. Binds nucleic acids with a preference for ssDNA or ssRNA to other types of DNAs. May play a role in nucleic acid damage repair. The protein is Probable RNA/DNA demethylase ALKBH6 (Alkbh6) of Mus musculus (Mouse).